Reading from the N-terminus, the 302-residue chain is ATP synthase subunit a (302 aa).

7 helical membrane passes run 61–81 (VDSL…FWLG), 119–139 (IAPL…MDLI), 148–168 (FEWV…FKIV), 172–192 (DPNI…FLTI), 214–234 (PVVK…ALLA), 252–272 (FVFI…AWPW), and 273–293 (AVFH…LTIV).

It belongs to the ATPase A chain family. As to quaternary structure, F-type ATPases have 2 components, CF(1) - the catalytic core - and CF(0) - the membrane proton channel. CF(1) has five subunits: alpha(3), beta(3), gamma(1), delta(1), epsilon(1). CF(0) has three main subunits: a(1), b(2) and c(9-12). The alpha and beta chains form an alternating ring which encloses part of the gamma chain. CF(1) is attached to CF(0) by a central stalk formed by the gamma and epsilon chains, while a peripheral stalk is formed by the delta and b chains.

It is found in the cell inner membrane. Its function is as follows. Key component of the proton channel; it plays a direct role in the translocation of protons across the membrane. This Alcanivorax borkumensis (strain ATCC 700651 / DSM 11573 / NCIMB 13689 / SK2) protein is ATP synthase subunit a.